A 217-amino-acid polypeptide reads, in one-letter code: Ribosomal RNA small subunit methyltransferase G (217 aa).

S-adenosyl-L-methionine is bound by residues Gly76, Phe81, 128-129 (LE), and Arg142.

It belongs to the methyltransferase superfamily. RNA methyltransferase RsmG family.

Its subcellular location is the cytoplasm. The catalysed reaction is guanosine(527) in 16S rRNA + S-adenosyl-L-methionine = N(7)-methylguanosine(527) in 16S rRNA + S-adenosyl-L-homocysteine. Specifically methylates the N7 position of guanine in position 527 of 16S rRNA. This Rhizorhabdus wittichii (strain DSM 6014 / CCUG 31198 / JCM 15750 / NBRC 105917 / EY 4224 / RW1) (Sphingomonas wittichii) protein is Ribosomal RNA small subunit methyltransferase G.